The primary structure comprises 129 residues: Protein PerB (129 aa).

Functionally, positive regulatory protein of bfpA, the gene coding for the bundle-forming pilus of EPEC. The sequence is that of Protein PerB (perB) from Escherichia coli O111:H-.